Consider the following 978-residue polypeptide: Transcription factor MYCGRDRAFT_87993 (978 aa).

C2H2-type zinc fingers lie at residues 2 to 24 (VFCTYCGQSFTRDEHLERHILTH) and 30 to 52 (FKCFTCHMSFARRDLLQRHYTVH). The segment at residues 79-105 (CSNCAKTKTKCDKKFPCSRCAGRNLRC) is a DNA-binding region (zn(2)-C6 fungal-type). 2 disordered regions span residues 113-231 (ASKN…SPRF) and 426-445 (THREGRGTSNGSHSPNPSGA). The segment covering 152-165 (SSSPSSQKSGTPIS) has biased composition (low complexity). Over residues 432 to 445 (GTSNGSHSPNPSGA) the composition is skewed to polar residues.

Its subcellular location is the nucleus. In terms of biological role, transcription factor; part of the gene cluster 29 that mediates the biosynthesis of dihydroxynaphthalene (DHN)-melanin, a bluish-green pigment forming a dark layer in the conidial wall that protects the conidia from UV radiations. In Zymoseptoria tritici (strain CBS 115943 / IPO323) (Speckled leaf blotch fungus), this protein is Transcription factor MYCGRDRAFT_87993.